The sequence spans 115 residues: Non-specific lipid-transfer protein 4.2 (115 aa).

A signal peptide spans 1-25 (MARAAATQLVLVAMVAAMLIVATDA). Disulfide bonds link Cys-29–Cys-77, Cys-39–Cys-54, Cys-55–Cys-97, and Cys-75–Cys-111.

The protein belongs to the plant LTP family.

Plant non-specific lipid-transfer proteins transfer phospholipids as well as galactolipids across membranes. May play a role in wax or cutin deposition in the cell walls of expanding epidermal cells and certain secretory tissues. This chain is Non-specific lipid-transfer protein 4.2 (LTP4.2), found in Hordeum vulgare (Barley).